Here is a 224-residue protein sequence, read N- to C-terminus: 2,5-diamino-6-ribosylamino-4(3H)-pyrimidinone 5'-phosphate reductase (224 aa).

NADP(+)-binding positions include G16, T57, D61, 83–86 (SKLR), V134, and 156–159 (GGTL).

It belongs to the HTP reductase family. In terms of assembly, homodimer.

The catalysed reaction is 2,5-diamino-6-(1-D-ribitylamino)pyrimidin-4(3H)-one 5'-phosphate + NADP(+) = 2,5-diamino-6-(1-D-ribosylamino)pyrimidin-4(3H)-one 5'-phosphate + NADPH + H(+). It catalyses the reaction 2,5-diamino-6-(1-D-ribitylamino)pyrimidin-4(3H)-one 5'-phosphate + NAD(+) = 2,5-diamino-6-(1-D-ribosylamino)pyrimidin-4(3H)-one 5'-phosphate + NADH + H(+). Its pathway is cofactor biosynthesis; riboflavin biosynthesis. Functionally, catalyzes an early step in riboflavin biosynthesis, the NAD(P)H-dependent reduction of the ribose side chain of 2,5-diamino-6-ribosylamino-4(3H)-pyrimidinone 5'-phosphate, yielding 2,5-diamino-6-ribitylamino-4(3H)-pyrimidinone 5'-phosphate. The beta anomer is the authentic substrate, and the alpha anomer can serve as substrate subsequent to spontaneous anomerization. NADPH and NADH function equally well as the reductants. Does not catalyze the reduction of 5-amino-6-(5-phospho-D-ribosylamino)uracil to 5-amino-6-(5-phospho-D-ribitylamino)uracil. This Methanocaldococcus jannaschii (strain ATCC 43067 / DSM 2661 / JAL-1 / JCM 10045 / NBRC 100440) (Methanococcus jannaschii) protein is 2,5-diamino-6-ribosylamino-4(3H)-pyrimidinone 5'-phosphate reductase (arfC).